Consider the following 331-residue polypeptide: Ketol-acid reductoisomerase (NADP(+)) (331 aa).

The 181-residue stretch at 2-182 (IKKYYDADCN…GAGRAGILET (181 aa)) folds into the KARI N-terminal Rossmann domain. NADP(+) contacts are provided by residues 25–28 (YGSQ), Arg48, and Ser51. His108 is a catalytic residue. NADP(+) is bound at residue Gly134. One can recognise a KARI C-terminal knotted domain in the interval 183–329 (TFREETETDL…AELRKMMSWI (147 aa)). Mg(2+) is bound by residues Asp191, Glu195, Glu227, and Glu231. Ser252 serves as a coordination point for substrate.

Belongs to the ketol-acid reductoisomerase family. It depends on Mg(2+) as a cofactor.

The catalysed reaction is (2R)-2,3-dihydroxy-3-methylbutanoate + NADP(+) = (2S)-2-acetolactate + NADPH + H(+). It catalyses the reaction (2R,3R)-2,3-dihydroxy-3-methylpentanoate + NADP(+) = (S)-2-ethyl-2-hydroxy-3-oxobutanoate + NADPH + H(+). It functions in the pathway amino-acid biosynthesis; L-isoleucine biosynthesis; L-isoleucine from 2-oxobutanoate: step 2/4. The protein operates within amino-acid biosynthesis; L-valine biosynthesis; L-valine from pyruvate: step 2/4. Its function is as follows. Involved in the biosynthesis of branched-chain amino acids (BCAA). Catalyzes an alkyl-migration followed by a ketol-acid reduction of (S)-2-acetolactate (S2AL) to yield (R)-2,3-dihydroxy-isovalerate. In the isomerase reaction, S2AL is rearranged via a Mg-dependent methyl migration to produce 3-hydroxy-3-methyl-2-ketobutyrate (HMKB). In the reductase reaction, this 2-ketoacid undergoes a metal-dependent reduction by NADPH to yield (R)-2,3-dihydroxy-isovalerate. The chain is Ketol-acid reductoisomerase (NADP(+)) from Brachyspira hyodysenteriae (strain ATCC 49526 / WA1).